A 176-amino-acid chain; its full sequence is Ubiquinol-cytochrome c reductase iron-sulfur subunit (176 aa).

Residues 15–36 traverse the membrane as a helical segment; the sequence is FLFVATGAAAAVGGAAALWPFI. Residues 87 to 174 enclose the Rieske domain; that stretch reads ARAVNVASLP…YQFVSDTKIQ (88 aa). Positions 119, 121, 138, and 141 each coordinate [2Fe-2S] cluster. Cysteines 124 and 140 form a disulfide.

This sequence belongs to the Rieske iron-sulfur protein family. The main subunits of complex b-c1 are: cytochrome b, cytochrome c1 and the Rieske protein. [2Fe-2S] cluster is required as a cofactor.

It localises to the cell membrane. The catalysed reaction is a quinol + 2 Fe(III)-[cytochrome c](out) = a quinone + 2 Fe(II)-[cytochrome c](out) + 2 H(+)(out). Functionally, component of the ubiquinol-cytochrome c reductase complex (complex III or cytochrome b-c1 complex), which is a respiratory chain that generates an electrochemical potential coupled to ATP synthesis. The sequence is that of Ubiquinol-cytochrome c reductase iron-sulfur subunit (petA) from Bradyrhizobium diazoefficiens (strain JCM 10833 / BCRC 13528 / IAM 13628 / NBRC 14792 / USDA 110).